A 90-amino-acid polypeptide reads, in one-letter code: Small ribosomal subunit protein uS15c (90 aa).

It belongs to the universal ribosomal protein uS15 family. Part of the 30S ribosomal subunit.

The protein localises to the plastid. The protein resides in the chloroplast. This is Small ribosomal subunit protein uS15c (rps15-A) from Oryza nivara (Indian wild rice).